Reading from the N-terminus, the 301-residue chain is Enolase-phosphatase E1 (301 aa).

Mg(2+)-binding residues include Asp22 and Glu24. Substrate is bound by residues 163-164 (SS) and Lys197. Asp222 is a Mg(2+) binding site. The tract at residues 273–301 (AQAGDTEAKRSASGDGALAAKKAPPTHDF) is disordered.

The protein belongs to the HAD-like hydrolase superfamily. MasA/MtnC family. Monomer. The cofactor is Mg(2+).

It localises to the cytoplasm. The protein localises to the nucleus. It catalyses the reaction 5-methylsulfanyl-2,3-dioxopentyl phosphate + H2O = 1,2-dihydroxy-5-(methylsulfanyl)pent-1-en-3-one + phosphate. It participates in amino-acid biosynthesis; L-methionine biosynthesis via salvage pathway; L-methionine from S-methyl-5-thio-alpha-D-ribose 1-phosphate: step 3/6. It functions in the pathway amino-acid biosynthesis; L-methionine biosynthesis via salvage pathway; L-methionine from S-methyl-5-thio-alpha-D-ribose 1-phosphate: step 4/6. Bifunctional enzyme that catalyzes the enolization of 2,3-diketo-5-methylthiopentyl-1-phosphate (DK-MTP-1-P) into the intermediate 2-hydroxy-3-keto-5-methylthiopentenyl-1-phosphate (HK-MTPenyl-1-P), which is then dephosphorylated to form the acireductone 1,2-dihydroxy-3-keto-5-methylthiopentene (DHK-MTPene). This chain is Enolase-phosphatase E1, found in Monosiga brevicollis (Choanoflagellate).